The following is a 286-amino-acid chain: Hypersensitive-induced response protein 1 (286 aa).

A lipid anchor (N-myristoyl glycine) is attached at glycine 2. A coiled-coil region spans residues 114–190; it reads LDDVFEQKND…EKILQIKRAE (77 aa).

In terms of assembly, self-interacts and forms heteromers. Interacts with NB-LRR class of R proteins before R proteins (e.g. RPS2 or RPM1) are activated by the effectors. Interacts with LRR1.

It is found in the cell membrane. Functionally, positive regulator of hypersensitive response (HR)-like cell death. May be involved in potassium ion channel regulation. This chain is Hypersensitive-induced response protein 1, found in Arabidopsis thaliana (Mouse-ear cress).